Consider the following 101-residue polypeptide: Small ribosomal subunit protein uS14 (101 aa).

This sequence belongs to the universal ribosomal protein uS14 family. As to quaternary structure, part of the 30S ribosomal subunit. Contacts proteins S3 and S10.

In terms of biological role, binds 16S rRNA, required for the assembly of 30S particles and may also be responsible for determining the conformation of the 16S rRNA at the A site. The chain is Small ribosomal subunit protein uS14 from Corynebacterium efficiens (strain DSM 44549 / YS-314 / AJ 12310 / JCM 11189 / NBRC 100395).